Reading from the N-terminus, the 852-residue chain is RNA-binding protein 10 (852 aa).

Basic and acidic residues-rich tracts occupy residues M1 to G14 and R21 to P45. A disordered region spans residues M1–Q78. The 96-residue stretch at R37 to P132 folds into the RRM 1 domain. Phosphoserine is present on S61. Residues K135–E165 form a RanBP2-type zinc finger. The RRM 2 domain maps to D223–G307. At K306 the chain carries N6-acetyllysine. 6 disordered regions span residues G343–E365, K386–T410, A426–S446, S459–P489, E542–K568, and D634–L675. The segment covering Y430–S446 has biased composition (polar residues). Positions S463–S484 are enriched in low complexity. Positions A545–K561 are enriched in basic and acidic residues. 5 positions are modified to phosphoserine: S640, S645, S655, S658, and S660. Basic and acidic residues predominate over residues E665–L675. A C2H2-type; atypical zinc finger spans residues L681–H706. Phosphoserine occurs at positions 703, 719, and 767. Positions A740–I783 are disordered. The region spanning S780–S826 is the G-patch domain. Residue R824 is modified to Omega-N-methylarginine.

In terms of assembly, associates with the spliceosome. Component of a large chromatin remodeling complex, at least composed of MYSM1, PCAF, RBM10 and KIF11/TRIP5.

The protein localises to the nucleus. Functionally, binds to ssRNA containing the consensus sequence 5'-AGGUAA-3'. May be involved in post-transcriptional processing, most probably in mRNA splicing. Binds to RNA homopolymers, with a preference for poly(G) and poly(U) and little for poly(A). May bind to specific miRNA hairpins. The chain is RNA-binding protein 10 from Rattus norvegicus (Rat).